The chain runs to 466 residues: Asparagine--tRNA ligase (466 aa).

Belongs to the class-II aminoacyl-tRNA synthetase family. As to quaternary structure, homodimer.

It is found in the cytoplasm. The catalysed reaction is tRNA(Asn) + L-asparagine + ATP = L-asparaginyl-tRNA(Asn) + AMP + diphosphate + H(+). This chain is Asparagine--tRNA ligase, found in Idiomarina loihiensis (strain ATCC BAA-735 / DSM 15497 / L2-TR).